Here is a 348-residue protein sequence, read N- to C-terminus: Doublesex- and mab-3-related transcription factor dmd-10 (348 aa).

DNA-binding regions (DM) lie at residues 43–91 (CQRC…YNQF) and 119–166 (CQKC…KIRR). Residues 316-348 (SMSMSSSPSKDDESGDEDSDGLNSNSIIDVITV) are disordered.

The protein belongs to the DMRT family. Dimorphically expressed in the dimorphically connected interneuron AVG; expression is observed in the AVG in males, but not in hermaphrodites.

The protein resides in the nucleus. In terms of biological role, transcription factor. Plays a role in neuronal signaling in polymodal sensory neuron ASH, downstream of sensory receptor activation. Required for maintenance of AVG synapses. This Caenorhabditis elegans protein is Doublesex- and mab-3-related transcription factor dmd-10.